Here is a 390-residue protein sequence, read N- to C-terminus: Acetylornithine aminotransferase (390 aa).

Pyridoxal 5'-phosphate-binding positions include 105–106 (GA) and phenylalanine 132. Position 135 (arginine 135) interacts with N(2)-acetyl-L-ornithine. Position 217–220 (217–220 (DEVQ)) interacts with pyridoxal 5'-phosphate. Lysine 246 is subject to N6-(pyridoxal phosphate)lysine. Residue serine 274 participates in N(2)-acetyl-L-ornithine binding. Threonine 275 contacts pyridoxal 5'-phosphate.

Belongs to the class-III pyridoxal-phosphate-dependent aminotransferase family. ArgD subfamily. As to quaternary structure, homodimer. Requires pyridoxal 5'-phosphate as cofactor.

It is found in the cytoplasm. The enzyme catalyses N(2)-acetyl-L-ornithine + 2-oxoglutarate = N-acetyl-L-glutamate 5-semialdehyde + L-glutamate. The protein operates within amino-acid biosynthesis; L-arginine biosynthesis; N(2)-acetyl-L-ornithine from L-glutamate: step 4/4. The sequence is that of Acetylornithine aminotransferase from Methanothermobacter thermautotrophicus (strain ATCC 29096 / DSM 1053 / JCM 10044 / NBRC 100330 / Delta H) (Methanobacterium thermoautotrophicum).